A 346-amino-acid chain; its full sequence is [LysW]-lysine/[LysW]-ornithine hydrolase (346 aa).

Zn(2+) is bound at residue H68. Residue D70 is part of the active site. D92 is a Zn(2+) binding site. E122 acts as the Proton acceptor in catalysis. The Zn(2+) site is built by E123, E146, and H317.

Belongs to the peptidase M20A family. LysK subfamily. Zn(2+) is required as a cofactor. It depends on Co(2+) as a cofactor.

It is found in the cytoplasm. The catalysed reaction is [amino-group carrier protein]-C-terminal-gamma-(L-lysyl)-L-glutamate + H2O = [amino-group carrier protein]-C-terminal-L-glutamate + L-lysine. The enzyme catalyses [amino-group carrier protein]-C-terminal-gamma-(L-ornithyl)-L-glutamate + H2O = [amino-group carrier protein]-C-terminal-L-glutamate + L-ornithine. It functions in the pathway amino-acid biosynthesis; L-lysine biosynthesis via AAA pathway; L-lysine from L-alpha-aminoadipate (Thermus route): step 5/5. Its pathway is amino-acid biosynthesis; L-arginine biosynthesis. Catalyzes the release of L-lysine from [LysW]-gamma-L-lysine and the release of L-ornithine from [LysW]-L-ornithine. The sequence is that of [LysW]-lysine/[LysW]-ornithine hydrolase from Saccharolobus islandicus (strain Y.N.15.51 / Yellowstone #2) (Sulfolobus islandicus).